We begin with the raw amino-acid sequence, 207 residues long: Ribosomal RNA small subunit methyltransferase G (207 aa).

S-adenosyl-L-methionine contacts are provided by residues Gly-76, Gln-81, 127–128 (VE), and Arg-141.

This sequence belongs to the methyltransferase superfamily. RNA methyltransferase RsmG family.

It is found in the cytoplasm. The catalysed reaction is guanosine(527) in 16S rRNA + S-adenosyl-L-methionine = N(7)-methylguanosine(527) in 16S rRNA + S-adenosyl-L-homocysteine. Specifically methylates the N7 position of guanine in position 527 of 16S rRNA. The protein is Ribosomal RNA small subunit methyltransferase G of Neisseria gonorrhoeae (strain ATCC 700825 / FA 1090).